The following is a 389-amino-acid chain: Endonuclease 8-like 1 (389 aa).

The active-site Schiff-base intermediate with DNA is P2. The active-site Proton donor is the E3. K54 functions as the Proton donor; for beta-elimination activity in the catalytic mechanism. N176 contacts DNA. A disordered region spans residues 278 to 389; sequence TIWFQGDPGP…PREAGESSAS (112 aa). Positions 322 to 333 are enriched in basic residues; sequence SRMRRARKHPPK. The span at 336–351 shows a compositional bias: polar residues; that stretch reads AQQSEGAGLQQNQETP. A compositionally biased stretch (basic residues) spans 357 to 373; sequence GKRRGQRASTGHRRRPK. Positions 374 to 389 are enriched in basic and acidic residues; that stretch reads TIPDTRPREAGESSAS.

This sequence belongs to the FPG family. Detected in heart, spleen and lung.

It localises to the cytoplasm. The protein resides in the cytoskeleton. It is found in the microtubule organizing center. The protein localises to the centrosome. Its subcellular location is the nucleus. It localises to the chromosome. The catalysed reaction is 2'-deoxyribonucleotide-(2'-deoxyribose 5'-phosphate)-2'-deoxyribonucleotide-DNA = a 3'-end 2'-deoxyribonucleotide-(2,3-dehydro-2,3-deoxyribose 5'-phosphate)-DNA + a 5'-end 5'-phospho-2'-deoxyribonucleoside-DNA + H(+). Functionally, involved in base excision repair of DNA damaged by oxidation or by mutagenic agents. Acts as a DNA glycosylase that recognizes and removes damaged bases. Has a preference for oxidized pyrimidines, such as thymine glycol, formamidopyrimidine (Fapy) and 5-hydroxyuracil. Has marginal activity towards 8-oxoguanine. Has AP (apurinic/apyrimidinic) lyase activity and introduces nicks in the DNA strand. Cleaves the DNA backbone by beta-delta elimination to generate a single-strand break at the site of the removed base with both 3'- and 5'-phosphates. Has DNA glycosylase/lyase activity towards mismatched uracil and thymine, in particular in U:C and T:C mismatches. Specifically binds 5-hydroxymethylcytosine (5hmC), suggesting that it acts as a specific reader of 5hmC. The protein is Endonuclease 8-like 1 (Neil1) of Mus musculus (Mouse).